The following is a 635-amino-acid chain: tRNA uridine 5-carboxymethylaminomethyl modification enzyme MnmG (635 aa).

FAD is bound at residue 19–24 (GAGHAG). 280 to 294 (GPRYCPSIEDKIVRF) is an NAD(+) binding site.

The protein belongs to the MnmG family. As to quaternary structure, homodimer. Heterotetramer of two MnmE and two MnmG subunits. FAD serves as cofactor.

It is found in the cytoplasm. In terms of biological role, NAD-binding protein involved in the addition of a carboxymethylaminomethyl (cmnm) group at the wobble position (U34) of certain tRNAs, forming tRNA-cmnm(5)s(2)U34. The polypeptide is tRNA uridine 5-carboxymethylaminomethyl modification enzyme MnmG (Synechocystis sp. (strain ATCC 27184 / PCC 6803 / Kazusa)).